Consider the following 459-residue polypeptide: Cysteine--tRNA ligase (459 aa).

Cys-27 is a binding site for Zn(2+). The short motif at 29 to 39 is the 'HIGH' region element; it reads VTVYDDCHIGH. Residues Cys-208, His-233, and Glu-237 each coordinate Zn(2+). The 'KMSKS' region motif lies at 265–269; the sequence is KMSKS. Lys-268 is a binding site for ATP.

Belongs to the class-I aminoacyl-tRNA synthetase family. As to quaternary structure, monomer. It depends on Zn(2+) as a cofactor.

It is found in the cytoplasm. It catalyses the reaction tRNA(Cys) + L-cysteine + ATP = L-cysteinyl-tRNA(Cys) + AMP + diphosphate. The protein is Cysteine--tRNA ligase of Francisella tularensis subsp. novicida (strain U112).